A 210-amino-acid polypeptide reads, in one-letter code: MITTSMTRTSALDTDMLGMVPMVIEQSGRGERAYDIYSRLLKERIIFLVGPVNDQMANLIVAQLLFLESENPDKDISLYINSPGGSVSAGMAIYDTMQFIKPNVSTLCTGLAASMGAFLLAAGEKGKRFSLPNSRIMIHQPLGGAQGQASDIEIQAREILYLRERLNAILAERTGKSVEEIAKDTDRDNFMSADAAVTYGMIDKVLATRA.

Serine 114 (nucleophile) is an active-site residue. The active site involves histidine 139.

Belongs to the peptidase S14 family. As to quaternary structure, fourteen ClpP subunits assemble into 2 heptameric rings which stack back to back to give a disk-like structure with a central cavity, resembling the structure of eukaryotic proteasomes.

It is found in the cytoplasm. It catalyses the reaction Hydrolysis of proteins to small peptides in the presence of ATP and magnesium. alpha-casein is the usual test substrate. In the absence of ATP, only oligopeptides shorter than five residues are hydrolyzed (such as succinyl-Leu-Tyr-|-NHMec, and Leu-Tyr-Leu-|-Tyr-Trp, in which cleavage of the -Tyr-|-Leu- and -Tyr-|-Trp bonds also occurs).. Its function is as follows. Cleaves peptides in various proteins in a process that requires ATP hydrolysis. Has a chymotrypsin-like activity. Plays a major role in the degradation of misfolded proteins. This chain is ATP-dependent Clp protease proteolytic subunit, found in Janthinobacterium sp. (strain Marseille) (Minibacterium massiliensis).